The chain runs to 169 residues: Cell cycle link protein (169 aa).

The segment at 9–22 (LPEELREKIVHDHL) is binding to host SKP1 protein. Residues 110 to 114 (LSCRE) carry the LXCXE motif, interaction with host RBR motif.

It belongs to the nanovirus Clink protein family. In terms of assembly, interacts with host SKP1. Interacts (via LXCXE domain) with host retinoblastoma-related protein 1 (RBR1). Interacts (via LXCXE domain) with retinoblastoma-related proteins (RBR).

In terms of biological role, interacts with and disrupts the function of host retinoblastoma-related proteins RBR, which are key regulators of the cell cycle. Induces transcriptional activation of E2F-regulated S-phase and G2/M-phase-specific genes. Inactivation of the ability of RBR to arrest the cell cycle leads to the stimulation of viral DNA replication. This is Cell cycle link protein (DNA-C) from Faba bean necrotic yellows virus (isolate Egyptian EV1-93) (FBNYV).